The following is a 306-amino-acid chain: Oxygen-dependent coproporphyrinogen-III oxidase (306 aa).

Ser-93 contacts substrate. 2 residues coordinate a divalent metal cation: His-97 and His-107. His-107 (proton donor) is an active-site residue. A substrate-binding site is contributed by Asn-109–Arg-111. Positions 146 and 176 each coordinate a divalent metal cation. The interval Tyr-241–Gly-276 is important for dimerization. A substrate-binding site is contributed by Gly-259–Arg-261.

It belongs to the aerobic coproporphyrinogen-III oxidase family. Homodimer. It depends on a divalent metal cation as a cofactor.

The protein localises to the cytoplasm. The catalysed reaction is coproporphyrinogen III + O2 + 2 H(+) = protoporphyrinogen IX + 2 CO2 + 2 H2O. The protein operates within porphyrin-containing compound metabolism; protoporphyrin-IX biosynthesis; protoporphyrinogen-IX from coproporphyrinogen-III (O2 route): step 1/1. In terms of biological role, involved in the heme biosynthesis. Catalyzes the aerobic oxidative decarboxylation of propionate groups of rings A and B of coproporphyrinogen-III to yield the vinyl groups in protoporphyrinogen-IX. This Stutzerimonas stutzeri (strain A1501) (Pseudomonas stutzeri) protein is Oxygen-dependent coproporphyrinogen-III oxidase.